Reading from the N-terminus, the 470-residue chain is Low molecular weight neuronal intermediate filament (470 aa).

A head region spans residues 1–91 (MTSRELYTSS…KIVRTNEKEQ (91 aa)). The IF rod domain occupies 88–399 (EKEQLQGLND…KLLEGEETRL (312 aa)). Positions 91-123 (QLQGLNDRFVTYIEKVHHLEQQNKLLESEVTLL) are coil 1A. The interval 121–136 (TLLRQKHSEPSRLSHI) is linker 1. The segment at 137–232 (YEQEIRELRS…KVHEEEIAEL (96 aa)) is coil 1B. The interval 233 to 251 (QASVQEAQISVEMDVVSKP) is linker 12. The tract at residues 252-270 (DLTAALKEIRMQYEVLSAR) is coil 2A. A linker 2 region spans residues 271–279 (NQQSSEEWY). Residues 280–395 (QAKIANVSLE…AAYRKLLEGE (116 aa)) form a coil 2B region. The tract at residues 396–470 (ETRLTSVGGG…EKISQKAAAN (75 aa)) is tail. Over residues 414–431 (FSSGSYSGGRSSTTSTIS) the composition is skewed to low complexity. Positions 414–470 (FSSGSYSGGRSSTTSTISIRKEEKKESPEGGKGGSSGQPKTSKPGDQEKISQKAAAN) are disordered. Basic and acidic residues predominate over residues 432–442 (IRKEEKKESPE).

It belongs to the intermediate filament family. In terms of tissue distribution, nervous system; in axons in the PNS and in small perikarya in the dorsal root ganglion.

This is Low molecular weight neuronal intermediate filament from Xenopus laevis (African clawed frog).